Consider the following 472-residue polypeptide: Flotillin-like protein 6 (472 aa).

Cys-37 carries the S-palmitoyl cysteine lipid modification. The stretch at 237–327 forms a coiled coil; the sequence is ENQREAEVAQ…ELYKKQKEAE (91 aa).

It belongs to the band 7/mec-2 family. Flotillin subfamily. May be palmitoylated. Very low occasional expression in roots and nodules.

The protein localises to the cell membrane. It is found in the membrane. Its subcellular location is the caveola. May act as a scaffolding protein within caveolar membranes, functionally participating in formation of caveolae or caveolae-like vesicles. May be involved in nodule formation. This chain is Flotillin-like protein 6 (FLOT6), found in Medicago truncatula (Barrel medic).